Here is a 637-residue protein sequence, read N- to C-terminus: Probable ATP-binding protein YheS (637 aa).

ABC transporter domains are found at residues 2–246 and 313–527; these read IVFS…AQQQ and LKME…KQEN. Residues 34–41 and 345–352 contribute to the ATP site; these read GKNGCGKS and GRNGAGKS. The disordered stretch occupies residues 523 to 559; that stretch reads QKQENQTDEAPKENANSAQARKDQKRREAELRAQTQP. Positions 542–553 are enriched in basic and acidic residues; it reads ARKDQKRREAEL.

It belongs to the ABC transporter superfamily. ABCF family. YheS subfamily.

In terms of biological role, genetic data indicate it may be involved in ribosome assembly or function. Ectopic expression exacerbates the cold-sensitive growth phenotype of a bipA deletion. The chain is Probable ATP-binding protein YheS (yheS) from Escherichia coli O6:H1 (strain CFT073 / ATCC 700928 / UPEC).